The following is a 183-amino-acid chain: 2-hydroxy-1,4-benzoquinone reductase (183 aa).

FMN contacts are provided by residues 11 to 18 (SLRRDSFN), 77 to 80 (EYNR), and serine 113.

Belongs to the SsuE family. In terms of assembly, homotetramer. Requires FMN as cofactor.

The enzyme catalyses 2-hydroxy-1,4-benzoquinone + NADH + 2 H(+) = benzene-1,2,4-triol + NAD(+). In terms of biological role, involved in the metabolism of 4-aminophenol. Catalyzes the reduction of the auto-oxidation product 2-hydroxy-1,4-benzoquinone back to hydroxyquinol. Has a broad substrate specificity toward benzoquinones, converting them to the corresponding 1,4-benzenediols. The sequence is that of 2-hydroxy-1,4-benzoquinone reductase from Burkholderia sp.